The following is a 400-amino-acid chain: Large envelope protein (400 aa).

The residue at position 1 (Met1) is an N-acetylmethionine. Gly2 carries the N-myristoyl glycine; by host lipid modification. The interval 2–119 (GGRLPKPRKG…PPLRDSHPQA (118 aa)) is pre-S1. The segment at 2–174 (GGRLPKPRKG…SSRIGDPAPT (173 aa)) is pre-S. Residues 2–181 (GGRLPKPRKG…APTMENITSG (180 aa)) lie on the Virion surface; in external conformation side of the membrane. Over 2 to 253 (GGRLPKPRKG…PGYRWMCLRR (252 aa)) the chain is Intravirion; in internal conformation. Arg4 carries an N-linked (GlcNAc...) asparagine glycan. Positions 84 to 116 (TLTTVPAVPPPASTNRQSGRQPTPISPPLRDSH) are disordered. Residues 96-106 (STNRQSGRQPT) show a composition bias toward polar residues. Residues 120 to 174 (MQWNSTKFHQTLQDPRVRGLYFPAGGSSSGTVNPAPNIASHISSISSRIGDPAPT) form a pre-S2 region. A helical transmembrane segment spans residues 182-202 (FLGPLLVLQAGFFLLTRILTI). Residues 203-253 (PQSLDSWWTSLNFLGEAPVCLGQNSQSPTSNHSPTSCPPICPGYRWMCLRR) lie on the Intravirion; in external conformation side of the membrane. The chain crosses the membrane as a helical span at residues 254 to 274 (FIIFLFILLLCLIFLLVLLDC). The Virion surface portion of the chain corresponds to 275–348 (QGMLPVCPLI…WASVRFSWLS (74 aa)). An N-linked (GlcNAc...) asparagine; by host glycan is attached at Asn320. A helical membrane pass occupies residues 349–369 (LLVPFVQWFVGLSPTVWLSVI). At 370 to 375 (WMMWYW) the chain is on the intravirion side. Residues 376–398 (GPSLYNILSPFIPLLPIFFCLWV) form a helical membrane-spanning segment. Residues 399–400 (YI) lie on the Virion surface side of the membrane.

This sequence belongs to the orthohepadnavirus major surface antigen family. As to quaternary structure, in its internal form (Li-HBsAg), interacts with the capsid protein and with the isoform S. Interacts with host chaperone CANX. In terms of assembly, associates with host chaperone CANX through its pre-S2 N glycan; this association may be essential for isoform M proper secretion. Interacts with isoform L. Interacts with the antigens of satellite virus HDV (HDVAgs); this interaction is required for encapsidation of HDV genomic RNA. In terms of processing, isoform M is N-terminally acetylated by host at a ratio of 90%, and N-glycosylated by host at the pre-S2 region. Post-translationally, myristoylated.

Its subcellular location is the virion membrane. In terms of biological role, the large envelope protein exists in two topological conformations, one which is termed 'external' or Le-HBsAg and the other 'internal' or Li-HBsAg. In its external conformation the protein attaches the virus to cell receptors and thereby initiating infection. This interaction determines the species specificity and liver tropism. This attachment induces virion internalization predominantly through caveolin-mediated endocytosis. The large envelope protein also assures fusion between virion membrane and endosomal membrane. In its internal conformation the protein plays a role in virion morphogenesis and mediates the contact with the nucleocapsid like a matrix protein. The middle envelope protein plays an important role in the budding of the virion. It is involved in the induction of budding in a nucleocapsid independent way. In this process the majority of envelope proteins bud to form subviral lipoprotein particles of 22 nm of diameter that do not contain a nucleocapsid. In Hepatitis B virus genotype A3 (isolate Cameroon/CMR711/1994) (HBV-A), this protein is Large envelope protein.